Consider the following 1085-residue polypeptide: Error-prone DNA polymerase 2 (1085 aa).

Residues 1040–1066 are disordered; sequence AGRGDEFAHGGGGPDSRDRQKPVVPRD.

Belongs to the DNA polymerase type-C family. DnaE2 subfamily.

It localises to the cytoplasm. The catalysed reaction is DNA(n) + a 2'-deoxyribonucleoside 5'-triphosphate = DNA(n+1) + diphosphate. Functionally, DNA polymerase involved in damage-induced mutagenesis and translesion synthesis (TLS). It is not the major replicative DNA polymerase. The chain is Error-prone DNA polymerase 2 from Agrobacterium fabrum (strain C58 / ATCC 33970) (Agrobacterium tumefaciens (strain C58)).